The primary structure comprises 548 residues: MGTLTSVAFAAAVNIRFRSFHRENIKTTITTLPKWQKRLCFSSTEDSHRFRIAKCLGNDENSNRDDSIGENGETHKSSVVKTATFEEEDEETSKSSSTTSSSNEFGSDKTSMPSTIDPTYSSFQIDSFKLMELLGPEKVDPADVKLIKDKLFGYSTFWVTKEEPFGDLGEGILFLGNLRGKKEDVFAKLQRKLVEVASDKYNLFMIEEPNSEGPDPRGGARVSFGLLRKEVSEPGPTTLWQYVIALILFLLTIGSSVELGIASQINRLPPEVVKYFTDPNAVEPPDMELLYPFVDAALPLAYGVLGILLFHELGHFLAAVPKKVKLSIPYFIPNITLGSFGAITQFKSILPDRSTKVDISLAGPFAGAALSVSMFAVGLFLSTEPDAANDLVQVPSMLFQGSLLLGLISRATLGYAALHAATVSIHPLVIAGWCGLTTTAFNMLPVGCLDGGRAVQGAFGKNALVTFGLSTYVMLGLRVLGGPLALPWGLYVLICQRTPEKPCLNDVTEVGTWRKALVGIALILVVLTLLPVWDELAEEVGIGLVTTF.

The transit peptide at Met1–Arg18 directs the protein to the chloroplast. A compositionally biased stretch (basic and acidic residues) spans Asn61–Lys76. The disordered stretch occupies residues Asn61–Ile116. Polar residues predominate over residues Asn103 to Ile116. 8 helical membrane-spanning segments follow: residues Tyr242–Ala262, Leu290–Phe310, Leu326–Phe346, Leu361–Leu381, Ala388–Ile408, Ala416–Leu436, Met474–Ile494, and Ala516–Leu536.

Belongs to the peptidase M50B family. As to expression, expressed in roots, leaves, cotyledons, hypocotyls, stems, flowers and siliques.

Its subcellular location is the plastid. It localises to the chloroplast membrane. Functionally, membrane-associated and ATP-independent metalloprotease required for development of both thylakoid grana and well-organized lamellae in chloroplast. Required for the accumulation of chlorophyll and chlorophyll a/b binding (CAB) proteins (from both PS I and PS II) in chloroplast membranes, and for grana formation and normal chloroplast development. Involved in the regulation of nuclear gene expression in response to ammonium stress and interacts with ABA signaling. Carries out beta-casein degradation in an ATP-independent manner in vitro. In Arabidopsis thaliana (Mouse-ear cress), this protein is Probable zinc metalloprotease EGY1, chloroplastic (EGY1).